Consider the following 245-residue polypeptide: Orotidine 5'-phosphate decarboxylase (245 aa).

Residues Asp-22, Lys-44, Asp-71–Thr-80, Thr-131, Arg-192, Gln-201, Gly-221, and Arg-222 contribute to the substrate site. The active-site Proton donor is the Lys-73.

Belongs to the OMP decarboxylase family. Type 1 subfamily. As to quaternary structure, homodimer.

It carries out the reaction orotidine 5'-phosphate + H(+) = UMP + CO2. It functions in the pathway pyrimidine metabolism; UMP biosynthesis via de novo pathway; UMP from orotate: step 2/2. In terms of biological role, catalyzes the decarboxylation of orotidine 5'-monophosphate (OMP) to uridine 5'-monophosphate (UMP). This chain is Orotidine 5'-phosphate decarboxylase, found in Escherichia coli O157:H7.